The chain runs to 537 residues: Phosphoenolpyruvate carboxykinase (ATP) (537 aa).

Positions 61, 195, and 201 each coordinate substrate. ATP contacts are provided by residues lysine 201, histidine 220, and 236–244; that span reads GLSGTGKTT. Residues lysine 201 and histidine 220 each coordinate Mn(2+). Aspartate 257 is a binding site for Mn(2+). Position 285 (glutamate 285) interacts with ATP. Residues 311–321 are compositionally biased toward basic and acidic residues; the sequence is PDFDNGSKTEN. Residues 311–342 form a disordered region; sequence PDFDNGSKTENTRSAYPLESIPNASPTGRAGQ. Position 323 (arginine 323) interacts with substrate. Arginine 323 and threonine 448 together coordinate ATP.

Belongs to the phosphoenolpyruvate carboxykinase (ATP) family. Mn(2+) serves as cofactor.

Its subcellular location is the cytoplasm. It carries out the reaction oxaloacetate + ATP = phosphoenolpyruvate + ADP + CO2. It functions in the pathway carbohydrate biosynthesis; gluconeogenesis. Its function is as follows. Involved in the gluconeogenesis. Catalyzes the conversion of oxaloacetate (OAA) to phosphoenolpyruvate (PEP) through direct phosphoryl transfer between the nucleoside triphosphate and OAA. The chain is Phosphoenolpyruvate carboxykinase (ATP) from Rhodopseudomonas palustris (strain BisB5).